Here is a 299-residue protein sequence, read N- to C-terminus: Aspartate carbamoyltransferase catalytic subunit (299 aa).

The carbamoyl phosphate site is built by arginine 51 and threonine 52. Position 79 (lysine 79) interacts with L-aspartate. Carbamoyl phosphate contacts are provided by arginine 101, histidine 130, and glutamine 133. L-aspartate is bound by residues arginine 163 and arginine 215. Residues glycine 256 and proline 257 each contribute to the carbamoyl phosphate site.

The protein belongs to the aspartate/ornithine carbamoyltransferase superfamily. ATCase family. Heterododecamer (2C3:3R2) of six catalytic PyrB chains organized as two trimers (C3), and six regulatory PyrI chains organized as three dimers (R2).

The enzyme catalyses carbamoyl phosphate + L-aspartate = N-carbamoyl-L-aspartate + phosphate + H(+). The protein operates within pyrimidine metabolism; UMP biosynthesis via de novo pathway; (S)-dihydroorotate from bicarbonate: step 2/3. Its function is as follows. Catalyzes the condensation of carbamoyl phosphate and aspartate to form carbamoyl aspartate and inorganic phosphate, the committed step in the de novo pyrimidine nucleotide biosynthesis pathway. This is Aspartate carbamoyltransferase catalytic subunit from Ehrlichia chaffeensis (strain ATCC CRL-10679 / Arkansas).